The chain runs to 402 residues: Diaminopimelate decarboxylase (402 aa).

Lysine 45 is modified (N6-(pyridoxal phosphate)lysine). Pyridoxal 5'-phosphate-binding positions include glycine 224 and 259 to 262 (EPGR). The substrate site is built by arginine 262, arginine 298, and tyrosine 302. Catalysis depends on cysteine 327, which acts as the Proton donor. Positions 328 and 356 each coordinate substrate. Position 356 (tyrosine 356) interacts with pyridoxal 5'-phosphate.

The protein belongs to the Orn/Lys/Arg decarboxylase class-II family. LysA subfamily. In terms of assembly, homodimer. Pyridoxal 5'-phosphate serves as cofactor.

It carries out the reaction meso-2,6-diaminopimelate + H(+) = L-lysine + CO2. The protein operates within amino-acid biosynthesis; L-lysine biosynthesis via DAP pathway; L-lysine from DL-2,6-diaminopimelate: step 1/1. Specifically catalyzes the decarboxylation of meso-diaminopimelate (meso-DAP) to L-lysine. This chain is Diaminopimelate decarboxylase, found in Campylobacter jejuni subsp. jejuni serotype O:2 (strain ATCC 700819 / NCTC 11168).